The primary structure comprises 544 residues: MAMNSKRKTPPGIALLRRVRGRNWSPKTFRYAILFITFIAYACYHASRKPSSIVKSVLHPDSSTKPPQEHNSDKIYPWPMGNVFVKREIGDIDEVLLHRKSKGWEPFNGKDGTSRLGEIDVAFLACYSIGMYVAGHLGDSLDLRLFLTWGMIGSGFFVGLFGMGYFWNIHAFWFFLVMQMAAGLFQATGWPSVVAVVGNWFGKRKRGLIMGIWNAHTSVGNICGSLIAAGVLEYGWGWSFIAPGFVMSLGGVLVYLFLAAYPEDVGFPDINSNSGKFIKRKRDVEEEEEEVEEDLGTDVEGDGEGSSGSGSGYENKRSVGLLQACMIPGVIPFALCLFFSKLVAYTFLYWLPFYLSQTTIGGEYVSVKTAGNLSTLFDVGGIVGGILCGYISDKFKARATTAAAFMYAAIPAMLVYHSYGGVSQTVNILLMMVAGLFVNGPYALITTAVSADLGTHKSLQGDSRALATVTAIIDGTGSAGAALGPLLTGFLSTLGWQAVFYMLVVGALCAGLLLTRLVIAEIREKLGYVDEEVPASEPLLTDRR.

6 helical membrane-spanning segments follow: residues 28–47 (TFRYAILFITFIAYACYHAS), 121–141 (VAFLACYSIGMYVAGHLGDSL), 156–176 (FFVGLFGMGYFWNIHAFWFFL), 181–201 (AAGLFQATGWPSVVAVVGNWF), 218–238 (SVGNICGSLIAAGVLEYGWGW), and 240–260 (FIAPGFVMSLGGVLVYLFLAA). The segment at 281–313 (KRDVEEEEEEVEEDLGTDVEGDGEGSSGSGSGY) is disordered. The segment covering 285-303 (EEEEEEVEEDLGTDVEGDG) has biased composition (acidic residues). 7 consecutive transmembrane segments (helical) span residues 319-339 (VGLLQACMIPGVIPFALCLFF), 342-362 (LVAYTFLYWLPFYLSQTTIGG), 371-391 (GNLSTLFDVGGIVGGILCGYI), 402-422 (AAAFMYAAIPAMLVYHSYGGV), 428-448 (ILLMMVAGLFVNGPYALITTA), 471-491 (AIIDGTGSAGAALGPLLTGFL), and 494-514 (LGWQAVFYMLVVGALCAGLLL).

The protein belongs to the major facilitator superfamily. Organophosphate:Pi antiporter (OPA) (TC 2.A.1.4) family.

It is found in the membrane. This is Putative glycerol-3-phosphate transporter 4 from Arabidopsis thaliana (Mouse-ear cress).